The primary structure comprises 344 residues: Eukaryotic translation initiation factor 2 subunit alpha homolog (344 aa).

In terms of domain architecture, S1 motif spans 21 to 92 (DMAVMIQVKN…EKGYIDLSKR (72 aa)). A Phosphoserine; by GCN2 modification is found at serine 56. Positions 312–344 (DNEEMSGDEDSGDEEEDTGMGEVDLDAGAGIIE) are disordered. Residues 314 to 336 (EEMSGDEDSGDEEEDTGMGEVDL) are compositionally biased toward acidic residues.

The protein belongs to the eIF-2-alpha family. In terms of assembly, heterotrimer composed of an alpha, a beta and a gamma chain. Phosphorylated at Ser-56 by GCN2.

In terms of biological role, functions in the early steps of protein synthesis by forming a ternary complex with GTP and initiator tRNA. This complex binds to a 40S ribosomal subunit, followed by mRNA binding to form a 43S pre-initiation complex. Junction of the 60S ribosomal subunit to form the 80S initiation complex is preceded by hydrolysis of the GTP bound to eIF-2 and release of an eIF-2-GDP binary complex. In order for eIF-2 to recycle and catalyze another round of initiation, the GDP bound to eIF-2 must exchange with GTP by way of a reaction catalyzed by eIF-2B. This chain is Eukaryotic translation initiation factor 2 subunit alpha homolog, found in Arabidopsis thaliana (Mouse-ear cress).